A 750-amino-acid polypeptide reads, in one-letter code: ABC transporter D family member 3 (750 aa).

A compositionally biased stretch (polar residues) spans 1–14 (MKKNNVNNITETLN). Positions 1–32 (MKKNNVNNITETLNSSSSSSSSSGSSSDEEVK) are disordered. Residues 15 to 26 (SSSSSSSSSGSS) are compositionally biased toward low complexity. A run of 4 helical transmembrane segments spans residues 63 to 83 (IVIILYEKPVIPLLLFLLLFG), 123 to 143 (FAIGGSALFDAIIKFIVSIMA), 188 to 208 (FTTLLSSIVSQCITGPMVVVY), and 215 to 235 (TTIDWYAPLIVYGYFFLGYFI). The region spanning 74 to 362 (PLLLFLLLFG…EQAKQQFEAL (289 aa)) is the ABC transmembrane type-1 domain. Residues 334–370 (ALLKRSNKNIKNEELLVEEEQAKQQFEALLKNKKRVI) adopt a coiled-coil conformation. The helical transmembrane segment at 382–402 (MFTFFSPLINYFIISIPVFFL) threads the bilayer. Positions 507–737 (ITLDDVTYFT…SNNINTINID (231 aa)) constitute an ABC transporter domain. 540–547 (GPSGSGKS) serves as a coordination point for ATP.

The protein belongs to the ABC transporter superfamily. ABCD family. Peroxisomal fatty acyl CoA transporter (TC 3.A.1.203) subfamily.

It is found in the membrane. In Dictyostelium discoideum (Social amoeba), this protein is ABC transporter D family member 3 (abcD3).